Consider the following 356-residue polypeptide: Vesicular integral-membrane protein VIP36 (356 aa).

Residues 1 to 44 (MAAEGWIWRWGWGRRCLGRPGLPGPGPGPATPLFLLLLLGPVVA) form the signal peptide. The Lumenal segment spans residues 45 to 322 (DITDGNSEHL…FRSGPLTGWR (278 aa)). The L-type lectin-like domain occupies 52–276 (EHLKREHSLI…DIISMKLFQL (225 aa)). Serine 96 and aspartate 131 together coordinate a carbohydrate. Positions 162, 164, and 166 each coordinate Ca(2+). 164–166 (YPN) lines the a carbohydrate pocket. Asparagine 183 carries an N-linked (GlcNAc...) asparagine glycan. Residue histidine 190 participates in a carbohydrate binding. Residue aspartate 193 coordinates Ca(2+). An intrachain disulfide couples cysteine 202 to cysteine 239. Position 260-262 (260-262 (GDL)) interacts with a carbohydrate. A helical transmembrane segment spans residues 323 to 345 (VFLLLLCALLGIIVCAVVGAVVF). Over 346–356 (QKRQERNKRFY) the chain is Cytoplasmic.

Monomer. It depends on Ca(2+) as a cofactor. In terms of tissue distribution, expressed in kidney, liver, intestine, lung, spleen and heart. Low expression in brain.

The protein localises to the golgi apparatus membrane. Functionally, plays a role as an intracellular lectin in the early secretory pathway. Interacts with N-acetyl-D-galactosamine and high-mannose type glycans and may also bind to O-linked glycans. Involved in the transport and sorting of glycoproteins carrying high mannose-type glycans. The protein is Vesicular integral-membrane protein VIP36 (LMAN2) of Canis lupus familiaris (Dog).